The primary structure comprises 358 residues: Methylthioribose-1-phosphate isomerase (358 aa).

Residues 54–56 (RGA), Arg96, and Gln205 each bind substrate. Asp246 acts as the Proton donor in catalysis. 256–257 (NK) contacts substrate.

The protein belongs to the eIF-2B alpha/beta/delta subunits family. MtnA subfamily.

The catalysed reaction is 5-(methylsulfanyl)-alpha-D-ribose 1-phosphate = 5-(methylsulfanyl)-D-ribulose 1-phosphate. It functions in the pathway amino-acid biosynthesis; L-methionine biosynthesis via salvage pathway; L-methionine from S-methyl-5-thio-alpha-D-ribose 1-phosphate: step 1/6. Functionally, catalyzes the interconversion of methylthioribose-1-phosphate (MTR-1-P) into methylthioribulose-1-phosphate (MTRu-1-P). The polypeptide is Methylthioribose-1-phosphate isomerase (Pseudomonas aeruginosa (strain UCBPP-PA14)).